Consider the following 356-residue polypeptide: NADH-quinone oxidoreductase subunit H (356 aa).

The next 8 helical transmembrane spans lie at 18–38, 87–107, 120–140, 166–186, 205–225, 265–285, 292–312, and 333–353; these read IVMIAQSVLLLVVLLVAIAYI, GVFLLAPLVSCVLALAAWAVI, VGILFIFAISSLSIYGIIMAG, IGFVIITVLLCAGTLNLSAVV, ILNWYVWPLFPMFVVFYVSAL, AITTMCALATILFLGGWLPPI, WVPGVIWFALKLFFMFFLIAM, and FLPLSLVMVVIVAGVLHFAGI.

Belongs to the complex I subunit 1 family. In terms of assembly, NDH-1 is composed of 14 different subunits. Subunits NuoA, H, J, K, L, M, N constitute the membrane sector of the complex.

Its subcellular location is the cell inner membrane. It carries out the reaction a quinone + NADH + 5 H(+)(in) = a quinol + NAD(+) + 4 H(+)(out). NDH-1 shuttles electrons from NADH, via FMN and iron-sulfur (Fe-S) centers, to quinones in the respiratory chain. The immediate electron acceptor for the enzyme in this species is believed to be ubiquinone. Couples the redox reaction to proton translocation (for every two electrons transferred, four hydrogen ions are translocated across the cytoplasmic membrane), and thus conserves the redox energy in a proton gradient. This subunit may bind ubiquinone. The protein is NADH-quinone oxidoreductase subunit H of Bradyrhizobium sp. (strain BTAi1 / ATCC BAA-1182).